A 256-amino-acid polypeptide reads, in one-letter code: Sec-independent protein translocase protein TatC (256 aa).

6 helical membrane passes run 25 to 45 (VICVVLVFVALVYFSNDIYHF), 77 to 97 (AIVAIFISVPYLLYQIWAFIA), 117 to 137 (ILFYCGVAFAYYIVFPLVFSF), 158 to 178 (FALALFLAFGVCFEVPIAIIL), 195 to 215 (PYIIVAAFFIGMLLTPPDVFS), and 217 to 237 (TLLAIPMCLLFELGLLVARFY).

Belongs to the TatC family. The Tat system comprises two distinct complexes: a TatABC complex, containing multiple copies of TatA, TatB and TatC subunits, and a separate TatA complex, containing only TatA subunits. Substrates initially bind to the TatABC complex, which probably triggers association of the separate TatA complex to form the active translocon.

The protein localises to the cell inner membrane. Its function is as follows. Part of the twin-arginine translocation (Tat) system that transports large folded proteins containing a characteristic twin-arginine motif in their signal peptide across membranes. Together with TatB, TatC is part of a receptor directly interacting with Tat signal peptides. In Haemophilus influenzae (strain ATCC 51907 / DSM 11121 / KW20 / Rd), this protein is Sec-independent protein translocase protein TatC.